The sequence spans 694 residues: DNA polymerase eta (694 aa).

The UmuC domain occupies 9 to 258 (VALVDMDCFF…MPIRKIRSLG (250 aa)). Mg(2+) contacts are provided by aspartate 13 and methionine 14. Mn(2+) is bound by residues aspartate 13 and methionine 14. Arginine 61 contacts a 2'-deoxyribonucleoside 5'-triphosphate. The Mg(2+) site is built by aspartate 115 and glutamate 116. Positions 115 and 116 each coordinate Mn(2+). Glutamate 116 is a catalytic residue. The disordered stretch occupies residues 565–598 (DSGPDDGAVKPVSSKAVSTEMNVAGDSPNVLDSP). The segment at 609–643 (ATEDQVLCEKCDSLVPVWDMPEHTDYHFALELQKS) adopts a UBZ3-type zinc-finger fold. Residues cysteine 616, cysteine 619, histidine 631, and histidine 635 each coordinate Zn(2+). Residues 651–694 (KPQAIPAVSPQGKRNPKSPSASSSKRLRPHGMQTLESFFKPLTH) are disordered. Glycyl lysine isopeptide (Lys-Gly) (interchain with G-Cter in ubiquitin) cross-links involve residues lysine 663, lysine 667, and lysine 675. The short motif at 682–689 (MQTLESFF) is the PIP-box element. Lysine 690 is covalently cross-linked (Glycyl lysine isopeptide (Lys-Gly) (interchain with G-Cter in ubiquitin)).

This sequence belongs to the DNA polymerase type-Y family. As to quaternary structure, interacts with REV1. Interacts with monoubiquitinated PCNA, but not unmodified PCNA. Interacts with POLI; this interaction targets POLI to the replication machinery. Interacts with PALB2 and BRCA2; the interactions are direct and are required to sustain the recruitment of POLH at blocked replication forks and to stimulate POLH-dependent DNA synthesis on D loop substrates. Interacts (via C-terminus) with TRAIP. Interacts with ubiquitin. Interacts with POLDIP2. Requires Mg(2+) as cofactor. Mn(2+) serves as cofactor. In terms of processing, monoubiquitinated by RCHY1/PIRH2. Ubiquitination depends on integrity of the UBZ3-type zinc finger domain and is enhanced by TRAIP. Ubiquitination inhibits the ability of PolH to interact with PCNA and to bypass UV-induced lesions. As to expression, ubiquitous.

The protein localises to the nucleus. The enzyme catalyses DNA(n) + a 2'-deoxyribonucleoside 5'-triphosphate = DNA(n+1) + diphosphate. The enzyme in complex with the DNA substrate binds a third divalent metal cation. The binding of this third divalent cation, which is coordinated by water molecules and two oxygen atoms from DNA and dNTP, is essential for catalyzing the DNA synthesis. Its function is as follows. DNA polymerase specifically involved in the DNA repair by translesion synthesis (TLS). Due to low processivity on both damaged and normal DNA, cooperates with the heterotetrameric (REV3L, REV7, POLD2 and POLD3) POLZ complex for complete bypass of DNA lesions. Inserts one or 2 nucleotide(s) opposite the lesion, the primer is further extended by the tetrameric POLZ complex. In the case of 1,2-intrastrand d(GpG)-cisplatin cross-link, inserts dCTP opposite the 3' guanine. Particularly important for the repair of UV-induced pyrimidine dimers. Although inserts the correct base, may cause base transitions and transversions depending upon the context. May play a role in hypermutation at immunoglobulin genes. Forms a Schiff base with 5'-deoxyribose phosphate at abasic sites, but does not have any lyase activity, preventing the release of the 5'-deoxyribose phosphate (5'-dRP) residue. This covalent trapping of the enzyme by the 5'-dRP residue inhibits its DNA synthetic activity during base excision repair, thereby avoiding high incidence of mutagenesis. Targets POLI to replication foci. This is DNA polymerase eta (Polh) from Mus musculus (Mouse).